An 85-amino-acid chain; its full sequence is Large ribosomal subunit protein bL31B (85 aa).

The protein belongs to the bacterial ribosomal protein bL31 family. Type B subfamily. Part of the 50S ribosomal subunit.

This Staphylococcus haemolyticus (strain JCSC1435) protein is Large ribosomal subunit protein bL31B.